The chain runs to 1576 residues: Pentafunctional AROM polypeptide (1576 aa).

The 3-dehydroquinate synthase stretch occupies residues 1–387 (MGSTTFENPT…YEPKASVVED (387 aa)). NAD(+)-binding positions include 49–51 (DTN), 86–89 (ENSK), 117–119 (GGV), and Asp122. Position 133 (Arg133) interacts with 7-phospho-2-dehydro-3-deoxy-D-arabino-heptonate. 142–143 (TT) is a binding site for NAD(+). Asp149 and Lys155 together coordinate 7-phospho-2-dehydro-3-deoxy-D-arabino-heptonate. Lys164 lines the NAD(+) pocket. Asn165 provides a ligand contact to 7-phospho-2-dehydro-3-deoxy-D-arabino-heptonate. Residues 182-185 (FLET) and Asn193 contribute to the NAD(+) site. Position 197 (Glu197) interacts with Zn(2+). 7-phospho-2-dehydro-3-deoxy-D-arabino-heptonate is bound by residues 197–200 (EVVK) and Lys253. The active-site Proton acceptor; for 3-dehydroquinate synthase activity is the Glu263. Residues 267 to 271 (RNILN) and His274 each bind 7-phospho-2-dehydro-3-deoxy-D-arabino-heptonate. Residue His274 participates in Zn(2+) binding. The Proton acceptor; for 3-dehydroquinate synthase activity role is filled by His278. The 7-phospho-2-dehydro-3-deoxy-D-arabino-heptonate site is built by His290 and Lys359. His290 contributes to the Zn(2+) binding site. The segment at 400-841 (VRPSVPETLN…WDILSKSFQV (442 aa)) is EPSP synthase. Residue Cys823 is the For EPSP synthase activity of the active site. Residues 863-1055 (DKSIFIIGMR…RNKPQSFFVS (193 aa)) are shikimate kinase. 870-877 (GMRGAGKT) contacts ATP. Residues 1056–1276 (LTMPDISGAA…AAPGQLSAAE (221 aa)) are 3-dehydroquinase. The active-site Proton acceptor; for 3-dehydroquinate dehydratase activity is His1179. Lys1207 acts as the Schiff-base intermediate with substrate; for 3-dehydroquinate dehydratase activity in catalysis. The shikimate dehydrogenase stretch occupies residues 1289 to 1576 (PKSFYLFGTP…RAAVMGDSTA (288 aa)).

It in the N-terminal section; belongs to the sugar phosphate cyclases superfamily. Dehydroquinate synthase family. This sequence in the 2nd section; belongs to the EPSP synthase family. In the 3rd section; belongs to the shikimate kinase family. The protein in the 4th section; belongs to the type-I 3-dehydroquinase family. It in the C-terminal section; belongs to the shikimate dehydrogenase family. As to quaternary structure, homodimer. Zn(2+) is required as a cofactor.

The protein localises to the cytoplasm. The enzyme catalyses 7-phospho-2-dehydro-3-deoxy-D-arabino-heptonate = 3-dehydroquinate + phosphate. The catalysed reaction is 3-dehydroquinate = 3-dehydroshikimate + H2O. It catalyses the reaction shikimate + NADP(+) = 3-dehydroshikimate + NADPH + H(+). It carries out the reaction shikimate + ATP = 3-phosphoshikimate + ADP + H(+). The enzyme catalyses 3-phosphoshikimate + phosphoenolpyruvate = 5-O-(1-carboxyvinyl)-3-phosphoshikimate + phosphate. Its pathway is metabolic intermediate biosynthesis; chorismate biosynthesis; chorismate from D-erythrose 4-phosphate and phosphoenolpyruvate: step 2/7. The protein operates within metabolic intermediate biosynthesis; chorismate biosynthesis; chorismate from D-erythrose 4-phosphate and phosphoenolpyruvate: step 3/7. It functions in the pathway metabolic intermediate biosynthesis; chorismate biosynthesis; chorismate from D-erythrose 4-phosphate and phosphoenolpyruvate: step 4/7. It participates in metabolic intermediate biosynthesis; chorismate biosynthesis; chorismate from D-erythrose 4-phosphate and phosphoenolpyruvate: step 5/7. Its pathway is metabolic intermediate biosynthesis; chorismate biosynthesis; chorismate from D-erythrose 4-phosphate and phosphoenolpyruvate: step 6/7. In terms of biological role, the AROM polypeptide catalyzes 5 consecutive enzymatic reactions in prechorismate polyaromatic amino acid biosynthesis. The polypeptide is Pentafunctional AROM polypeptide (Sclerotinia sclerotiorum (strain ATCC 18683 / 1980 / Ss-1) (White mold)).